A 226-amino-acid chain; its full sequence is 7-cyano-7-deazaguanine synthase (226 aa).

7–17 is a binding site for ATP; sequence ISGGMDSLVVA. Zn(2+)-binding residues include cysteine 187, cysteine 195, cysteine 198, and cysteine 201.

Belongs to the QueC family. Requires Zn(2+) as cofactor.

It catalyses the reaction 7-carboxy-7-deazaguanine + NH4(+) + ATP = 7-cyano-7-deazaguanine + ADP + phosphate + H2O + H(+). It functions in the pathway purine metabolism; 7-cyano-7-deazaguanine biosynthesis. Functionally, catalyzes the ATP-dependent conversion of 7-carboxy-7-deazaguanine (CDG) to 7-cyano-7-deazaguanine (preQ(0)). The chain is 7-cyano-7-deazaguanine synthase from Chlorobium phaeobacteroides (strain BS1).